The primary structure comprises 167 residues: Ubiquitin-fold modifier-conjugating enzyme 1 (167 aa).

The active-site Glycyl thioester intermediate is the Cys-116. Lys-122 is covalently cross-linked (Glycyl lysine isopeptide (Lys-Gly) (interchain with G-Cter in UFM1)).

Belongs to the ubiquitin-conjugating enzyme family. UFC1 subfamily. As to quaternary structure, interacts with UBA5 (via C-terminus). Interacts with UFL1. Interacts with UFM1. Interacts with KIRREL3. Ufmylated at Lys-122. Deufmylated by UFSP1.

In terms of biological role, E2-like enzyme which specifically catalyzes the second step in ufmylation. Accepts the ubiquitin-like modifier UFM1 from the E1 enzyme UBA5 and forms an intermediate with UFM1 via a thioester linkage. Ufmylation is involved in various processes, such as ribosome recycling, response to DNA damage, interferon response or reticulophagy (also called ER-phagy). The protein is Ubiquitin-fold modifier-conjugating enzyme 1 of Mus musculus (Mouse).